We begin with the raw amino-acid sequence, 425 residues long: MSFNLLDLPIVPRQKALKYLEPIDLFELSLCSKRMAQSVRDLKIEASAHFITLTRGQSSVHVQFKERSRAIWWDFKEIFMKKDLKDKRKIGYILFENCEKFRRGAFTLDEFYCHFDNLEEGAAAVSKHFQFLFPGPLNILLSPTVYRHLEFLFFEPSIQKCESFEMCGADIPAKRTMNRIFDKLTIEKKLCIRPKTSENYVIKQALRVEELFLRSARWMTREHLLELNCIVADLSDHNFQCSDFEAFAEKWMNNKSSKVENLRFQWQSDVEFKLENLKTSRWDSTRRERNYIFTMKNESVQIDCSDGFELERNDGRLATFVVEQQEDRTHILYFLVWIELFPEKKRLENLPKTLGPLYKQLEKINRDYPDESSLERLLSNPNLVYTEFLETYKVLKNMDGENRSPSTGQAFRRTIFDKIYNTIDL.

In terms of domain architecture, F-box spans 2-53 (SFNLLDLPIVPRQKALKYLEPIDLFELSLCSKRMAQSVRDLKIEASAHFITL).

This is an uncharacterized protein from Caenorhabditis elegans.